We begin with the raw amino-acid sequence, 637 residues long: Serine protease Hayan (637 aa).

A signal peptide spans 1–26; that stretch reads MAMISARRYFLLGLLVLTTSAYVTVG. The Clip domain occupies 31–79; that stretch reads PCQVRSDIPGICLSSSACENIRGYLKSGTLSTSQVPSCGFGAREEIICC. 3 disulfides stabilise this stretch: C32–C78, C42–C68, and C48–C79. 4 disordered regions span residues 95–137, 152–178, 216–260, and 286–365; these read FHAT…LDEN, KPQKTHESLKLPTQESMKTPTHESMKM, QRSF…NNNN, and LQTT…EKER. The segment covering 125-136 has biased composition (basic and acidic residues); it reads EGKRERESRLDE. The segment covering 234–244 has biased composition (polar residues); it reads PLTTPRSRPQR. Low complexity predominate over residues 245–260; that stretch reads PNNSNFNTNPSPNNNN. Residues 306 to 320 show a composition bias toward basic and acidic residues; sequence EPYRFRGQDRDKDTQ. The segment covering 321-332 has biased composition (polar residues); that stretch reads PQEPWNDVSNNL. Intrachain disulfides connect C371–C497, C414–C430, C543–C567, and C578–C609. Residues 385–632 form the Peptidase S1 domain; that stretch reads ILDGERVDRG…FLDYIEGIVW (248 aa). Active-site charge relay system residues include H429 and D477. The active-site Charge relay system is the S582.

Belongs to the peptidase S1 family. CLIP subfamily.

The protein localises to the secreted. Functionally, serine protease which, by converting prophenoloxidase 1 (PPO1) into its active form, plays an essential role in the melanization immune response to physical or septic wounding. May function in diverse PPO1-activating cascades that are negatively controlled by different serpin proteins; Spn27A and Spn28D in the hemolymph, and Spn28D and Spn77BA in the trachea. Also required in the systematic wound response by mediating the redox-dependent activation of the JNK cytoprotective cascade in neuronal tissues after integument wounding. This Drosophila melanogaster (Fruit fly) protein is Serine protease Hayan.